Consider the following 87-residue polypeptide: A-agglutinin-binding subunit (87 aa).

Residues 1 to 18 (MQLLRCFSIFSVIASVLA) form the signal peptide. O-linked (Man...) threonine glycosylation occurs at threonine 22. Serine 30 carries an O-linked (Man...) serine glycan. Residue threonine 32 is glycosylated (O-linked (Man...) threonine). A glycan (O-linked (Man...) serine) is linked at serine 39. Threonine 63 carries an O-linked (Man...) threonine glycan. An O-linked (Man...) serine glycan is attached at serine 66. Threonine 75 carries O-linked (Man...) threonine glycosylation.

Heterodimer; disulfide-linked. Interacts with SAG1.

Its function is as follows. Receptor binding subunit of the a-agglutinin heterodimer. S.cerevisiae a and alpha cells express the complementary cell surface glycoproteins a-agglutinin and alpha-agglutinin, respectively, which interact with one another to promote cellular aggregation during mating. The polypeptide is A-agglutinin-binding subunit (AGA2) (Saccharomyces cerevisiae (strain ATCC 204508 / S288c) (Baker's yeast)).